We begin with the raw amino-acid sequence, 363 residues long: Flagellar P-ring protein (363 aa).

An N-terminal signal peptide occupies residues 1–18 (MWKKVLIAIVFITSFSFA).

The protein belongs to the FlgI family. In terms of assembly, the basal body constitutes a major portion of the flagellar organelle and consists of four rings (L,P,S, and M) mounted on a central rod.

Its subcellular location is the periplasm. The protein localises to the bacterial flagellum basal body. Its function is as follows. Assembles around the rod to form the L-ring and probably protects the motor/basal body from shearing forces during rotation. The protein is Flagellar P-ring protein of Sulfurihydrogenibium sp. (strain YO3AOP1).